The chain runs to 221 residues: 7-cyano-7-deazaguanine synthase (221 aa).

Residue 8–18 (LSGGMDSAAVI) coordinates ATP. Residues Cys186, Cys196, Cys199, and Cys202 each contribute to the Zn(2+) site.

The protein belongs to the QueC family. Zn(2+) is required as a cofactor.

It catalyses the reaction 7-carboxy-7-deazaguanine + NH4(+) + ATP = 7-cyano-7-deazaguanine + ADP + phosphate + H2O + H(+). It functions in the pathway purine metabolism; 7-cyano-7-deazaguanine biosynthesis. Catalyzes the ATP-dependent conversion of 7-carboxy-7-deazaguanine (CDG) to 7-cyano-7-deazaguanine (preQ(0)). The sequence is that of 7-cyano-7-deazaguanine synthase from Stenotrophomonas maltophilia (strain K279a).